Reading from the N-terminus, the 123-residue chain is Cyclic ether formation enzyme xenC (123 aa).

The first 24 residues, 1–24 (MSSLLLSDVLSYGIFGFSALCVQA), serve as a signal peptide directing secretion. Helical transmembrane passes span 58-78 (SALRYVFVSINIAVCVLLWSP) and 102-122 (LGESPIPHLLLVSTVGAAILV).

It belongs to the cyclic ether formation enzyme xenC family.

The protein localises to the membrane. The protein operates within mycotoxin biosynthesis. Its function is as follows. Cyclic ether formation enzyme; part of the gene cluster that mediates the biosynthesis of xenoacremones such as xenoacremone A, a compound that shows inhibitory activity toward the PI3K/AKT signaling pathway and which has the ability to induce apoptosis of A549 lung cancer cells. Within the pathway, cooperation of the hybrid PKS-NRPS xenE and the trans-acting enoyl reductase xenG is responsible for the formation of the reduced tyrosine-nonaketide derivative. The alpha/beta hydrolase xenA then accelerates intramolecular nucleophilic attack to give a pyrrolidone derivative. Subsequently, three enzymes, xenF, xenD, and xenC, coordinately participate in the conversion to xenoacremone B. XenF catalyzes sigmatropic rearrangement to form an A-ring, which leads to an unusual intermediate with a hexane ring, which is required for the formation of the tricarbocyclic product. Epoxidation catalyzed by xenD and the formation of the paracyclophane ether catalyzed by xenC initiate a spontaneous intramolecular Diels-Alder (IMDA) reaction to yield xenoacremone B. Spontaneous hydration of xenoacremone B leads to the formation of xenoacremone A, which undergoes subsequent methylation to afford xenoacremone C. This chain is Cyclic ether formation enzyme xenC, found in Xenoacremonium sinensis (Endophyte fungus).